A 384-amino-acid polypeptide reads, in one-letter code: Probable endopolygalacturonase C (384 aa).

Positions 1-19 are cleaved as a signal peptide; that stretch reads MVRQLALACGLLAAVAVQA. Residues 20 to 40 constitute a propeptide that is removed on maturation; the sequence is APAEPAHPMVTEAPDASLLHK. An intrachain disulfide couples Cys-45 to Cys-63. PbH1 repeat units follow at residues 176–207 and 208–229; these read ATDL…DIGE and STDI…AINS. Asp-222 serves as the catalytic Proton donor. Cys-224 and Cys-240 are joined by a disulfide. His-244 is an active-site residue. 2 PbH1 repeats span residues 254–280 and 288–310; these read RDDN…RIKA and ISDI…VIEQ. Asn-261 carries an N-linked (GlcNAc...) asparagine glycan. 2 disulfides stabilise this stretch: Cys-349–Cys-354 and Cys-373–Cys-382.

The protein belongs to the glycosyl hydrolase 28 family.

Its subcellular location is the secreted. The catalysed reaction is (1,4-alpha-D-galacturonosyl)n+m + H2O = (1,4-alpha-D-galacturonosyl)n + (1,4-alpha-D-galacturonosyl)m.. Its function is as follows. Involved in maceration and soft-rotting of plant tissue. Hydrolyzes the 1,4-alpha glycosidic bonds of de-esterified pectate in the smooth region of the plant cell wall. The sequence is that of Probable endopolygalacturonase C (pgaC) from Aspergillus aculeatus.